A 159-amino-acid chain; its full sequence is Ribosome maturation factor RimP (159 aa).

The protein belongs to the RimP family.

It is found in the cytoplasm. In terms of biological role, required for maturation of 30S ribosomal subunits. The protein is Ribosome maturation factor RimP of Streptococcus pneumoniae serotype 2 (strain D39 / NCTC 7466).